The following is a 252-amino-acid chain: Ribonuclease HII (252 aa).

One can recognise an RNase H type-2 domain in the interval 41–232 (LLVAGVDEAG…VRLALEGREQ (192 aa)). A divalent metal cation is bound by residues Asp-47, Glu-48, and Asp-140.

It belongs to the RNase HII family. Mn(2+) is required as a cofactor. It depends on Mg(2+) as a cofactor.

It is found in the cytoplasm. The catalysed reaction is Endonucleolytic cleavage to 5'-phosphomonoester.. Its function is as follows. Endonuclease that specifically degrades the RNA of RNA-DNA hybrids. This chain is Ribonuclease HII, found in Xanthomonas oryzae pv. oryzae (strain KACC10331 / KXO85).